A 256-amino-acid chain; its full sequence is Thiazole synthase (256 aa).

Lys96 serves as the catalytic Schiff-base intermediate with DXP. 1-deoxy-D-xylulose 5-phosphate-binding positions include Gly157, 183 to 184, and 205 to 206; these read AG and NT.

Belongs to the ThiG family. As to quaternary structure, homotetramer. Forms heterodimers with either ThiH or ThiS.

Its subcellular location is the cytoplasm. It carries out the reaction [ThiS sulfur-carrier protein]-C-terminal-Gly-aminoethanethioate + 2-iminoacetate + 1-deoxy-D-xylulose 5-phosphate = [ThiS sulfur-carrier protein]-C-terminal Gly-Gly + 2-[(2R,5Z)-2-carboxy-4-methylthiazol-5(2H)-ylidene]ethyl phosphate + 2 H2O + H(+). It participates in cofactor biosynthesis; thiamine diphosphate biosynthesis. In terms of biological role, catalyzes the rearrangement of 1-deoxy-D-xylulose 5-phosphate (DXP) to produce the thiazole phosphate moiety of thiamine. Sulfur is provided by the thiocarboxylate moiety of the carrier protein ThiS. In vitro, sulfur can be provided by H(2)S. This Bacillus cytotoxicus (strain DSM 22905 / CIP 110041 / 391-98 / NVH 391-98) protein is Thiazole synthase.